The following is a 399-amino-acid chain: Acetate kinase (399 aa).

Asparagine 9 contacts Mg(2+). Lysine 16 contacts ATP. Arginine 90 contacts substrate. Aspartate 147 functions as the Proton donor/acceptor in the catalytic mechanism. ATP-binding positions include 207-211, 282-284, and 330-334; these read HIGNG, DLR, and GVGEN. Position 384 (glutamate 384) interacts with Mg(2+).

It belongs to the acetokinase family. In terms of assembly, homodimer. Mg(2+) serves as cofactor. It depends on Mn(2+) as a cofactor.

The protein localises to the cytoplasm. It carries out the reaction acetate + ATP = acetyl phosphate + ADP. It functions in the pathway metabolic intermediate biosynthesis; acetyl-CoA biosynthesis; acetyl-CoA from acetate: step 1/2. In terms of biological role, catalyzes the formation of acetyl phosphate from acetate and ATP. Can also catalyze the reverse reaction. In Staphylococcus saprophyticus subsp. saprophyticus (strain ATCC 15305 / DSM 20229 / NCIMB 8711 / NCTC 7292 / S-41), this protein is Acetate kinase.